Here is a 112-residue protein sequence, read N- to C-terminus: Omega-agatoxin-1A (112 aa).

The N-terminal stretch at 1 to 19 (MMKFVVFLACLFVAAHSFA) is a signal peptide. The propeptide occupies 20-36 (VEGEEEYFEAEVPELER). The propeptide at 103 to 109 (RSEESER) is glu-rich.

This sequence belongs to the neurotoxin 04 (omega-agtx) family. 01 (type I omega-agtx) subfamily. In terms of assembly, heterodimer of two subunits, a major chain and a minor chain, linked by a disulfide bond. Post-translationally, proteolytically processed to yield the major and the minor chains. In terms of tissue distribution, expressed by the venom gland.

It is found in the secreted. Its function is as follows. Omega-agatoxins are antagonists of voltage-gated calcium channels. They block insect neuromuscular transmission presynaptically. This toxin is a blocker of L-type calcium channels (Cav/CACNA1). This is Omega-agatoxin-1A from Agelenopsis aperta (North American funnel-web spider).